A 396-amino-acid polypeptide reads, in one-letter code: Large ribosomal subunit protein uL4A (396 aa).

Positions 352–373 are enriched in basic and acidic residues; it reads KAKEKKPDDGKPKAKKPLDAKT. Positions 352–374 are disordered; it reads KAKEKKPDDGKPKAKKPLDAKTK.

It belongs to the universal ribosomal protein uL4 family. Component of the large ribosomal subunit.

Its subcellular location is the cytoplasm. Functionally, component of the large ribosomal subunit. The ribosome is a large ribonucleoprotein complex responsible for the synthesis of proteins in the cell. In Xenopus laevis (African clawed frog), this protein is Large ribosomal subunit protein uL4A (rpl4-a).